A 104-amino-acid chain; its full sequence is Glutaredoxin (104 aa).

Positions M3–K103 constitute a Glutaredoxin domain. Residues C23 and C26 are joined by a disulfide bond.

Belongs to the glutaredoxin family. CPYC subfamily.

The protein resides in the cytoplasm. Has a glutathione-disulfide oxidoreductase activity in the presence of NADPH and glutathione reductase. Reduces low molecular weight disulfides and proteins. The protein is Glutaredoxin of Vernicia fordii (Tung).